The following is a 441-amino-acid chain: ATP-dependent protease ATPase subunit HslU (441 aa).

Residues I18, 60-65 (GVGKTE), D254, E319, and R391 contribute to the ATP site.

This sequence belongs to the ClpX chaperone family. HslU subfamily. In terms of assembly, a double ring-shaped homohexamer of HslV is capped on each side by a ring-shaped HslU homohexamer. The assembly of the HslU/HslV complex is dependent on binding of ATP.

It localises to the cytoplasm. Its function is as follows. ATPase subunit of a proteasome-like degradation complex; this subunit has chaperone activity. The binding of ATP and its subsequent hydrolysis by HslU are essential for unfolding of protein substrates subsequently hydrolyzed by HslV. HslU recognizes the N-terminal part of its protein substrates and unfolds these before they are guided to HslV for hydrolysis. The sequence is that of ATP-dependent protease ATPase subunit HslU from Shewanella sediminis (strain HAW-EB3).